The following is a 177-amino-acid chain: DNA repair protein RAD33 (177 aa).

An N-acetylserine modification is found at serine 2. Lysine 19 is covalently cross-linked (Glycyl lysine isopeptide (Lys-Gly) (interchain with G-Cter in ubiquitin)).

It is found in the nucleus. Its function is as follows. Involved in nucleotide excision repair (NER) of damaged DNA. Required for the repair of RNA polymerase I-transcribed rDNA and RNA polymerase II-transcribed DNA regions. May have a role in stabilizing the DNA repair proteins RAD4 and RAD34. In Saccharomyces cerevisiae (strain ATCC 204508 / S288c) (Baker's yeast), this protein is DNA repair protein RAD33 (RAD33).